The chain runs to 393 residues: Protein TsgA homolog (393 aa).

The next 12 membrane-spanning stretches (helical) occupy residues 11 to 31 (WISF…GMVM), 51 to 71 (FLNA…EIIP), 78 to 98 (FGFV…SLAL), 101 to 121 (AAMF…TFLI), 134 to 154 (LLFT…VAAY), 162 to 182 (WYWV…LTFG), 206 to 226 (IGVL…LGFI), 245 to 265 (TLVS…SFIL), 273 to 293 (ILTV…KAQP), 297 to 317 (AWFI…IITL), 332 to 352 (FVLT…GPIV), and 361 to 381 (LLTA…LGFV).

Belongs to the major facilitator superfamily. TsgA family.

Its subcellular location is the cell inner membrane. This chain is Protein TsgA homolog, found in Citrobacter koseri (strain ATCC BAA-895 / CDC 4225-83 / SGSC4696).